Here is a 378-residue protein sequence, read N- to C-terminus: MSKVLFVFGTRPEAIKMAPLVIEFKNNPAIEVKVCVTGQHREMLDQVLDFFEIEPDYDLNIMKQKQSLGSITCSILTRLDEILASFMPAHIFVHGDTTTTFAASLAAFYQNIKVWHIEAGLRTWNMNSPFPEEGNRQLTSKLAFFHAAPTLQAKDNLLRESVKEKNIIVTGNTVIDALLIGIKKITGSTGDVREIISLKNKLNLDKKIILVTLHRRENQGELLRTICDDIKQLALEHDDIEIVFPVHMSPRIREVVNEKLSGVVNIKLVEPLAYPGFIWLMNNAHFILSDSGGVQEEAPSLQKPVLVARDTTERPEVIENGAAMLVDPRIPNNIYSSCKKLLSDERLYEKMSQAGNPFGDGKASKKILDYFVSLEDIK.

His-214 is an active-site residue.

Belongs to the UDP-N-acetylglucosamine 2-epimerase family.

It catalyses the reaction UDP-N-acetyl-alpha-D-glucosamine = UDP-N-acetyl-alpha-D-mannosamine. The protein operates within bacterial outer membrane biogenesis; LPS O-antigen biosynthesis. This Salmonella borreze protein is UDP-N-acetylglucosamine 2-epimerase (rfbC).